A 402-amino-acid polypeptide reads, in one-letter code: CCA-adding enzyme (402 aa).

Residues Gly-32 and Arg-35 each coordinate ATP. Gly-32 and Arg-35 together coordinate CTP. Residues Asp-45 and Asp-47 each contribute to the Mg(2+) site. Positions 119, 162, 165, 168, and 171 each coordinate ATP. 5 residues coordinate CTP: Arg-119, Asp-162, Arg-165, Arg-168, and Arg-171.

It belongs to the tRNA nucleotidyltransferase/poly(A) polymerase family. Bacterial CCA-adding enzyme type 3 subfamily. Homodimer. Mg(2+) serves as cofactor.

The catalysed reaction is a tRNA precursor + 2 CTP + ATP = a tRNA with a 3' CCA end + 3 diphosphate. It catalyses the reaction a tRNA with a 3' CCA end + 2 CTP + ATP = a tRNA with a 3' CCACCA end + 3 diphosphate. In terms of biological role, catalyzes the addition and repair of the essential 3'-terminal CCA sequence in tRNAs without using a nucleic acid template. Adds these three nucleotides in the order of C, C, and A to the tRNA nucleotide-73, using CTP and ATP as substrates and producing inorganic pyrophosphate. tRNA 3'-terminal CCA addition is required both for tRNA processing and repair. Also involved in tRNA surveillance by mediating tandem CCA addition to generate a CCACCA at the 3' terminus of unstable tRNAs. While stable tRNAs receive only 3'-terminal CCA, unstable tRNAs are marked with CCACCA and rapidly degraded. The chain is CCA-adding enzyme from Lactococcus lactis subsp. cremoris (strain MG1363).